Here is an 877-residue protein sequence, read N- to C-terminus: Translation initiation factor IF-2 (877 aa).

Positions proline 66–proline 115 are enriched in basic and acidic residues. 3 disordered regions span residues proline 66–lysine 127, serine 187–glutamate 208, and glutamate 241–glutamate 290. Over residues lysine 192 to histidine 201 the composition is skewed to basic residues. A compositionally biased stretch (polar residues) spans alanine 245–asparagine 265. One can recognise a tr-type G domain in the interval glutamine 376–glutamate 543. The segment at glycine 385–threonine 392 is G1. Glycine 385–threonine 392 lines the GTP pocket. Positions glycine 410–histidine 414 are G2. The G3 stretch occupies residues aspartate 431–glycine 434. Residues aspartate 431–histidine 435 and asparagine 485–aspartate 488 contribute to the GTP site. The G4 stretch occupies residues asparagine 485–aspartate 488. Positions serine 521–lysine 523 are G5.

It belongs to the TRAFAC class translation factor GTPase superfamily. Classic translation factor GTPase family. IF-2 subfamily.

The protein localises to the cytoplasm. Its function is as follows. One of the essential components for the initiation of protein synthesis. Protects formylmethionyl-tRNA from spontaneous hydrolysis and promotes its binding to the 30S ribosomal subunits. Also involved in the hydrolysis of GTP during the formation of the 70S ribosomal complex. The chain is Translation initiation factor IF-2 from Campylobacter lari (strain RM2100 / D67 / ATCC BAA-1060).